Here is a 389-residue protein sequence, read N- to C-terminus: 1-deoxy-D-xylulose 5-phosphate reductoisomerase (389 aa).

NADPH-binding residues include Thr10, Gly11, Ser12, Ile13, Asn38, and Asn122. Position 123 (Lys123) interacts with 1-deoxy-D-xylulose 5-phosphate. An NADPH-binding site is contributed by Glu124. Asp148 contributes to the Mn(2+) binding site. 1-deoxy-D-xylulose 5-phosphate is bound by residues Ser149, Glu150, Ser173, and His196. Glu150 contacts Mn(2+). Gly202 serves as a coordination point for NADPH. Ser209, Asn214, Lys215, and Glu218 together coordinate 1-deoxy-D-xylulose 5-phosphate. Glu218 provides a ligand contact to Mn(2+).

Belongs to the DXR family. It depends on Mg(2+) as a cofactor. Mn(2+) is required as a cofactor.

The enzyme catalyses 2-C-methyl-D-erythritol 4-phosphate + NADP(+) = 1-deoxy-D-xylulose 5-phosphate + NADPH + H(+). It participates in isoprenoid biosynthesis; isopentenyl diphosphate biosynthesis via DXP pathway; isopentenyl diphosphate from 1-deoxy-D-xylulose 5-phosphate: step 1/6. Its function is as follows. Catalyzes the NADPH-dependent rearrangement and reduction of 1-deoxy-D-xylulose-5-phosphate (DXP) to 2-C-methyl-D-erythritol 4-phosphate (MEP). In Wolbachia sp. subsp. Brugia malayi (strain TRS), this protein is 1-deoxy-D-xylulose 5-phosphate reductoisomerase.